Consider the following 280-residue polypeptide: MGWHDGCIRCMVGVPFASVIATVLCFAGVALFCGCGHEALSGTEKLIETYFSKNYQEYEYLIHVINAFQYVIYGIAIFFFLFGILLLAEGFYTTTAIKHILGEFKPPAIKGGLISTVTGGTPKGRSTRGRQPVHTIELICRCLGKWLGHPDKFVGVTYIITILWILIFACSAVPVYIYFNTWVTCQSIAFPGKTTTSVSTLCSDARMYGVLPWNAFPGKVCGTSLLAICKTSEFQMTFHLFIAAFVGAAATLVALLTYMVGASFNYAVLRVTGRSDRSKF.

Residues 1 to 10 are Cytoplasmic-facing; it reads MGWHDGCIRC. 2 S-palmitoyl cysteine lipidation sites follow: Cys-7 and Cys-10. A helical transmembrane segment spans residues 11-36; the sequence is MVGVPFASVIATVLCFAGVALFCGCG. Residues 37–59 are Extracellular-facing; it reads HEALSGTEKLIETYFSKNYQEYE. A helical membrane pass occupies residues 60-88; that stretch reads YLIHVINAFQYVIYGIAIFFFLFGILLLA. Over 89–152 the chain is Cytoplasmic; that stretch reads EGFYTTTAIK…LGKWLGHPDK (64 aa). 2 S-palmitoyl cysteine lipidation sites follow: Cys-140 and Cys-142. A helical membrane pass occupies residues 153–179; it reads FVGVTYIITILWILIFACSAVPVYIYF. Residues 180 to 239 are Extracellular-facing; sequence NTWVTCQSIAFPGKTTTSVSTLCSDARMYGVLPWNAFPGKVCGTSLLAICKTSEFQMTFH. Disulfide bonds link Cys-185-Cys-229 and Cys-202-Cys-221. Residues 240 to 269 traverse the membrane as a helical segment; it reads LFIAAFVGAAATLVALLTYMVGASFNYAVL. Topologically, residues 270–280 are cytoplasmic; it reads RVTGRSDRSKF.

This sequence belongs to the myelin proteolipid protein family.

The protein resides in the cell membrane. Its function is as follows. This is the major myelin protein from the central nervous system. It plays an important role in the formation or maintenance of the multilamellar structure of myelin. This is Myelin proteolipid protein A (plp1-a) from Xenopus laevis (African clawed frog).